Reading from the N-terminus, the 1217-residue chain is DNA-directed RNA polymerase subunit beta' (1217 aa).

Residues C60, C62, C75, and C78 each contribute to the Zn(2+) site. Mg(2+)-binding residues include D449, D451, and D453. C821, C895, C902, and C905 together coordinate Zn(2+).

It belongs to the RNA polymerase beta' chain family. The RNAP catalytic core consists of 2 alpha, 1 beta, 1 beta' and 1 omega subunit. When a sigma factor is associated with the core the holoenzyme is formed, which can initiate transcription. Mg(2+) is required as a cofactor. It depends on Zn(2+) as a cofactor.

It catalyses the reaction RNA(n) + a ribonucleoside 5'-triphosphate = RNA(n+1) + diphosphate. DNA-dependent RNA polymerase catalyzes the transcription of DNA into RNA using the four ribonucleoside triphosphates as substrates. This Lactobacillus acidophilus (strain ATCC 700396 / NCK56 / N2 / NCFM) protein is DNA-directed RNA polymerase subunit beta'.